Consider the following 422-residue polypeptide: SH2 domain-containing protein 4A (422 aa).

2 positions are modified to phosphoserine: S117 and S123. Disordered stretches follow at residues 141-190 (PQNV…EDEK) and 202-282 (SEWQ…VIRT). Basic and acidic residues-rich tracts occupy residues 163-190 (TKKD…EDEK) and 212-231 (KAAD…DYKR). Residue S233 is modified to Phosphoserine. Residues 316–408 (WFHGILTLKK…LGKELLLFPC (93 aa)) form the SH2 domain.

Interacts with ESR1.

It is found in the cytoplasm. In terms of biological role, inhibits estrogen-induced cell proliferation by competing with PLCG for binding to ESR1, blocking the effect of estrogen on PLCG and repressing estrogen-induced proliferation. May play a role in T-cell development and function. The chain is SH2 domain-containing protein 4A (Sh2d4a) from Rattus norvegicus (Rat).